The sequence spans 299 residues: GTPase Era (299 aa).

The Era-type G domain maps to 4–171; the sequence is KSGFVAILGR…VDILSENLGE (168 aa). The segment at 12-19 is G1; the sequence is GRPNVGKS. Residue 12–19 coordinates GTP; the sequence is GRPNVGKS. The G2 stretch occupies residues 38–42; that stretch reads QTTRN. The G3 stretch occupies residues 59 to 62; that stretch reads DTPG. Residues 59–63 and 121–124 contribute to the GTP site; these read DTPGI and NKID. The segment at 121–124 is G4; the sequence is NKID. The G5 stretch occupies residues 150–152; sequence ISA. The KH type-2 domain occupies 202 to 280; the sequence is TREEIPHSVA…FLETWVKVKK (79 aa).

Belongs to the TRAFAC class TrmE-Era-EngA-EngB-Septin-like GTPase superfamily. Era GTPase family. Monomer.

The protein resides in the cytoplasm. It is found in the cell membrane. In terms of biological role, an essential GTPase that binds both GDP and GTP, with rapid nucleotide exchange. Plays a role in 16S rRNA processing and 30S ribosomal subunit biogenesis and possibly also in cell cycle regulation and energy metabolism. This is GTPase Era from Streptococcus pneumoniae (strain JJA).